The chain runs to 135 residues: AVCVSLLGAANIPPQPLNLYQFKNMIQCAGTQLWVAYVNYGCYCGKGGSGTPVDQLDRCCQTHDHCYHNAKRFGKCNPYFKTYEYTCNKPNLTCRGAKGSCGRNVCDCDRAAAICFAAAPYNLSNFGINKKTHCK.

7 disulfides stabilise this stretch: Cys28–Cys87, Cys42–Cys134, Cys44–Cys60, Cys59–Cys115, Cys66–Cys108, Cys76–Cys101, and Cys94–Cys106. 3 residues coordinate Ca(2+): Tyr43, Gly45, and Gly47. The active site involves His63. Ca(2+) is bound at residue Asp64. Asp109 is an active-site residue.

The protein belongs to the phospholipase A2 family. Group I subfamily. D49 sub-subfamily. Ca(2+) serves as cofactor. As to expression, expressed by the venom gland.

It is found in the secreted. The catalysed reaction is a 1,2-diacyl-sn-glycero-3-phosphocholine + H2O = a 1-acyl-sn-glycero-3-phosphocholine + a fatty acid + H(+). Snake venom phospholipase A2 (PLA2) that inhibits neuromuscular transmission by blocking acetylcholine release from the nerve termini. PLA2 catalyzes the calcium-dependent hydrolysis of the 2-acyl groups in 3-sn-phosphoglycerides. In Bungarus fasciatus (Banded krait), this protein is Basic phospholipase A2 10.